A 98-amino-acid chain; its full sequence is C-X-C motif chemokine 10 (98 aa).

Residues 1 to 21 form the signal peptide; sequence MNQTAILICCLVFLTLSGIQG. Arginine 26 bears the Citrulline mark. 2 cysteine pairs are disulfide-bonded: cysteine 30-cysteine 57 and cysteine 32-cysteine 74.

The protein belongs to the intercrine alpha (chemokine CxC) family.

It localises to the secreted. Chemotactic for monocytes and T-lymphocytes. Binds to CXCR3. The chain is C-X-C motif chemokine 10 (CXCL10) from Macaca nemestrina (Pig-tailed macaque).